A 688-amino-acid chain; its full sequence is Ethylmalonyl-CoA mutase (688 aa).

The region spanning 530–659 is the B12-binding domain; sequence TPRLVVGKPG…VGLAKVVERA (130 aa). Adenosylcob(III)alamin is bound at residue histidine 543. Residues 666–688 are disordered; sequence DRADTEAGVPGAPKRNESGAQVF.

The protein belongs to the methylmalonyl-CoA mutase family. It depends on adenosylcob(III)alamin as a cofactor.

It catalyses the reaction (2R)-ethylmalonyl-CoA = (2S)-methylsuccinyl-CoA. In terms of biological role, radical enzyme that catalyzes the transformation of (2R)-ethylmalonyl-CoA to (2S)-methylsuccinyl-CoA. Is involved in the ethylmalonyl-CoA pathway for acetyl-CoA assimilation required for M.extorquens growth on one- and two-carbon compounds such as ethylamine, methanol or ethanol as sole carbon source. This enzyme acts as a regulatory metabolic control point in this pathway, that allows M.extorquens to efficiently restore metabolic balance when challenged with a sudden change in the growth substrate. The chain is Ethylmalonyl-CoA mutase from Methylorubrum extorquens (strain ATCC 14718 / DSM 1338 / JCM 2805 / NCIMB 9133 / AM1) (Methylobacterium extorquens).